Here is a 267-residue protein sequence, read N- to C-terminus: 2-keto-3-deoxy-L-rhamnonate aldolase (267 aa).

Catalysis depends on H49, which acts as the Proton acceptor. Residue Q151 participates in substrate binding. Mg(2+) is bound at residue E153. Substrate contacts are provided by A178 and D179. D179 contributes to the Mg(2+) binding site.

The protein belongs to the HpcH/HpaI aldolase family. KDR aldolase subfamily. As to quaternary structure, homohexamer. The cofactor is Mg(2+).

The catalysed reaction is 2-dehydro-3-deoxy-L-rhamnonate = (S)-lactaldehyde + pyruvate. In terms of biological role, catalyzes the reversible retro-aldol cleavage of 2-keto-3-deoxy-L-rhamnonate (KDR) to pyruvate and lactaldehyde. This Salmonella paratyphi A (strain ATCC 9150 / SARB42) protein is 2-keto-3-deoxy-L-rhamnonate aldolase.